Here is a 409-residue protein sequence, read N- to C-terminus: Multifunctional CCA protein (409 aa).

The ATP site is built by G8 and R11. CTP-binding residues include G8 and R11. Mg(2+) is bound by residues D21 and D23. Residues R91, R137, and R140 each contribute to the ATP site. CTP-binding residues include R91, R137, and R140. The region spanning 228–329 (TGIHTLMVVE…ITLMDQNDAW (102 aa)) is the HD domain.

Belongs to the tRNA nucleotidyltransferase/poly(A) polymerase family. Bacterial CCA-adding enzyme type 1 subfamily. As to quaternary structure, monomer. Can also form homodimers and oligomers. It depends on Mg(2+) as a cofactor. Ni(2+) serves as cofactor.

The catalysed reaction is a tRNA precursor + 2 CTP + ATP = a tRNA with a 3' CCA end + 3 diphosphate. The enzyme catalyses a tRNA with a 3' CCA end + 2 CTP + ATP = a tRNA with a 3' CCACCA end + 3 diphosphate. Catalyzes the addition and repair of the essential 3'-terminal CCA sequence in tRNAs without using a nucleic acid template. Adds these three nucleotides in the order of C, C, and A to the tRNA nucleotide-73, using CTP and ATP as substrates and producing inorganic pyrophosphate. tRNA 3'-terminal CCA addition is required both for tRNA processing and repair. Also involved in tRNA surveillance by mediating tandem CCA addition to generate a CCACCA at the 3' terminus of unstable tRNAs. While stable tRNAs receive only 3'-terminal CCA, unstable tRNAs are marked with CCACCA and rapidly degraded. The protein is Multifunctional CCA protein of Psychromonas ingrahamii (strain DSM 17664 / CCUG 51855 / 37).